The chain runs to 179 residues: Large ribosomal subunit protein uL5 (179 aa).

The protein belongs to the universal ribosomal protein uL5 family. As to quaternary structure, part of the 50S ribosomal subunit; part of the 5S rRNA/L5/L18/L25 subcomplex. Contacts the 5S rRNA and the P site tRNA. Forms a bridge to the 30S subunit in the 70S ribosome.

In terms of biological role, this is one of the proteins that bind and probably mediate the attachment of the 5S RNA into the large ribosomal subunit, where it forms part of the central protuberance. In the 70S ribosome it contacts protein S13 of the 30S subunit (bridge B1b), connecting the 2 subunits; this bridge is implicated in subunit movement. Contacts the P site tRNA; the 5S rRNA and some of its associated proteins might help stabilize positioning of ribosome-bound tRNAs. The polypeptide is Large ribosomal subunit protein uL5 (Dehalococcoides mccartyi (strain ATCC BAA-2100 / JCM 16839 / KCTC 5957 / BAV1)).